Consider the following 340-residue polypeptide: MSDQKINILAIESSCDDTAAAVLCNGKILSNIVATQKVHEQYGGVVPELASRAHQQNIVPVIHQALAKANIDKKDVSAIAFTRGPGLMGSLLVGTSFAKSLSMGLNIPLIEINHMQAHILAHFIEEDDFEKPTFPFLAMTISGGHTQIVKVTDYFKMEVIGETIDDAVGEAFDKSAKILGLPYPGGPLIDKYAQEGDPKAFKFPKPKVDGLNFSFSGFKTAVLYFVQRETKNDPEFVEKNLKDICASIQYTIIGILIDKLKKAVKETGITQVAIAGGVSANSGIRQALKDAEQKWGWKCFVPKFEYTTDNAAMIGIAGYHKYLKKDFADFSVTAQSRYKF.

Residues His114 and His118 each coordinate Fe cation. Residues 140 to 144 (TISGG), Asp173, Gly186, Asp190, and Asn281 contribute to the substrate site. Asp309 contributes to the Fe cation binding site.

It belongs to the KAE1 / TsaD family. It depends on Fe(2+) as a cofactor.

Its subcellular location is the cytoplasm. The enzyme catalyses L-threonylcarbamoyladenylate + adenosine(37) in tRNA = N(6)-L-threonylcarbamoyladenosine(37) in tRNA + AMP + H(+). In terms of biological role, required for the formation of a threonylcarbamoyl group on adenosine at position 37 (t(6)A37) in tRNAs that read codons beginning with adenine. Is involved in the transfer of the threonylcarbamoyl moiety of threonylcarbamoyl-AMP (TC-AMP) to the N6 group of A37, together with TsaE and TsaB. TsaD likely plays a direct catalytic role in this reaction. This is tRNA N6-adenosine threonylcarbamoyltransferase from Christiangramia forsetii (strain DSM 17595 / CGMCC 1.15422 / KT0803) (Gramella forsetii).